Here is a 223-residue protein sequence, read N- to C-terminus: All-trans retinoic acid-induced differentiation factor (223 aa).

The N-terminal stretch at 1-25 is a signal peptide; the sequence is MASRESGGSRAAALLLVLGVERALA. Over 26 to 193 the chain is Extracellular; it reads LPEICTLCPG…YKCMRQGSFS (168 aa). The EGF-like domain maps to 146–187; sequence QRDLCNSTGSPEMCPENGSCASDGPGLLQCVCADGFHGYKCM. Disulfide bonds link Cys150–Cys165, Cys159–Cys175, and Cys177–Cys186. A helical membrane pass occupies residues 194–214; it reads LLMFFGILGSTTLAISILLWG. The Cytoplasmic segment spans residues 215 to 223; that stretch reads TQRRKAKAS.

As to quaternary structure, interacts with NELL1; the interaction promotes osteoblastic differentiation and mineralization. Interacts with SLC37A3; the interaction is direct and both proteins are mutually dependent for their stability.

The protein localises to the nucleus envelope. The protein resides in the cell membrane. It localises to the lysosome membrane. Its function is as follows. Promotes osteoblast cell differentiation and terminal mineralization. Plays a role in inducing the cell cycle arrest via inhibiting CCND1 expression in all-trans-retinoic acid (ATRA) signal pathway. In osteoclasts, forms a transporter complex with ATRAID for nitrogen-containing-bisphophonates (N-BPs) required for releasing N-BP molecules that have trafficked to lysosomes through fluid-phase endocytosis into the cytosol. This chain is All-trans retinoic acid-induced differentiation factor (Atraid), found in Mus musculus (Mouse).